The following is a 235-amino-acid chain: Post-translational flagellin modification protein B (235 aa).

The protein belongs to the CMP-NeuNAc synthase family.

Its function is as follows. Required for biosynthesis of LAH modification in the post-translational modification of Campylobacter coli flagellin. This is Post-translational flagellin modification protein B (ptmB) from Campylobacter coli.